The chain runs to 130 residues: Large ribosomal subunit protein bL12 (130 aa).

The protein belongs to the bacterial ribosomal protein bL12 family. Homodimer. Part of the ribosomal stalk of the 50S ribosomal subunit. Forms a multimeric L10(L12)X complex, where L10 forms an elongated spine to which 2 to 4 L12 dimers bind in a sequential fashion. Binds GTP-bound translation factors.

In terms of biological role, forms part of the ribosomal stalk which helps the ribosome interact with GTP-bound translation factors. Is thus essential for accurate translation. This is Large ribosomal subunit protein bL12 from Mycobacterium leprae (strain TN).